Reading from the N-terminus, the 443-residue chain is Nuclear hormone receptor family member nhr-60 (443 aa).

A compositionally biased stretch (low complexity) spans 1–20 (MIQSSSSISQDSLDLPSILS). The disordered stretch occupies residues 1–40 (MIQSSSSISQDSLDLPSILSTFSADEPEDEPSPTAVKSTK). Positions 44–121 (PTECLICGNS…VGMNPLAMEV (78 aa)) form a DNA-binding region, nuclear receptor. NR C4-type zinc fingers lie at residues 47–67 (CLIC…CNGC) and 83–104 (CKAK…CRAC). The region spanning 196–439 (NEFSGLEYLL…KDLVMRVIED (244 aa)) is the NR LBD domain. Positions 225 to 249 (LRRDQLGPPRLPKPPSPGKPRDSQH) are disordered. Positions 233-242 (PRLPKPPSPG) are enriched in pro residues.

The protein belongs to the nuclear hormone receptor family.

The protein localises to the nucleus. Functionally, orphan nuclear receptor (Potential). Required for embryonic and larval morphogenesis and probably for seam cell positioning and migration. The chain is Nuclear hormone receptor family member nhr-60 from Caenorhabditis elegans.